The primary structure comprises 441 residues: Proline--tRNA ligase (441 aa).

Belongs to the class-II aminoacyl-tRNA synthetase family. ProS type 2 subfamily. In terms of assembly, homodimer.

The protein localises to the cytoplasm. It catalyses the reaction tRNA(Pro) + L-proline + ATP = L-prolyl-tRNA(Pro) + AMP + diphosphate. In terms of biological role, catalyzes the attachment of proline to tRNA(Pro) in a two-step reaction: proline is first activated by ATP to form Pro-AMP and then transferred to the acceptor end of tRNA(Pro). This is Proline--tRNA ligase from Bartonella henselae (strain ATCC 49882 / DSM 28221 / CCUG 30454 / Houston 1) (Rochalimaea henselae).